The sequence spans 906 residues: Catenin alpha-1 (906 aa).

At threonine 2 the chain carries N-acetylthreonine. Residues 2–228 (TAVHAGNINF…PILYTASQAC (227 aa)) form an involved in homodimerization region. Residue lysine 57 forms a Glycyl lysine isopeptide (Lys-Gly) (interchain with G-Cter in SUMO2) linkage. The interval 97-148 (VRKQGDLMKAAAGEFADDPCSSVKRGNMVRAARALLSAVTRLLILADMADVY) is interaction with JUP and CTNNB1. A phosphoserine mark is found at serine 264, serine 268, serine 295, and serine 297. Residues 325–394 (TRDDRRERIV…AVMDHVSDSF (70 aa)) form an interaction with alpha-actinin region. Residue threonine 634 is modified to Phosphothreonine. Position 641 is a phosphoserine; by CK2 (serine 641). At threonine 645 the chain carries Phosphothreonine. Serine 652 and serine 655 each carry phosphoserine; by CK1. Position 658 is a phosphothreonine; by CK1 (threonine 658). A Glycyl lysine isopeptide (Lys-Gly) (interchain with G-Cter in SUMO2) cross-link involves residue lysine 797. At serine 851 the chain carries Phosphoserine. Basic and acidic residues predominate over residues 864-880 (PEKKPLVKREKQDETQT). Residues 864 to 894 (PEKKPLVKREKQDETQTKIKRASQKKHVNPV) are disordered. A compositionally biased stretch (basic residues) spans 881 to 891 (KIKRASQKKHV).

This sequence belongs to the vinculin/alpha-catenin family. In terms of assembly, monomer and homodimer; the monomer preferentially binds to CTNNB1 and the homodimer to actin. Component of an cadherin:catenin adhesion complex composed of at least of CDH26, beta-catenin/CTNNB1, alpha-catenin/CTNNA1 and p120 catenin/CTNND1. Possible component of an E-cadherin/ catenin adhesion complex together with E-cadherin/CDH1 and beta-catenin/CTNNB1 or gamma-catenin/JUP; the complex is located to adherens junctions. The stable association of CTNNA1 is controversial as CTNNA1 was shown not to bind to F-actin when assembled in the complex. Alternatively, the CTNNA1-containing complex may be linked to F-actin by other proteins such as LIMA1. Binds AFDN and F-actin. Interacts with ARHGAP21. Interacts with AJUBA. Interacts with LIMA1. Interacts with vinculin/VCL. Interacts with TJP2/ZO2 (via N-terminus). Interacts with TJP1/ZO1 (via N-terminus). Sumoylated. Post-translationally, phosphorylation seems to contribute to the strength of cell-cell adhesion rather than to the basic capacity for cell-cell adhesion. In terms of tissue distribution, ubiquitously expressed in normal tissues. Abundantly expressed in brain and cerebellum, also expressed in the placenta, liver, lung, colon, heart, pancreas, stomach and thymus.

The protein resides in the cytoplasm. It is found in the cytoskeleton. The protein localises to the cell junction. It localises to the adherens junction. Its subcellular location is the cell membrane. The protein resides in the nucleus. In terms of biological role, associates with the cytoplasmic domain of a variety of cadherins. The association of catenins to cadherins produces a complex which is linked to the actin filament network, and which seems to be of primary importance for cadherins cell-adhesion properties. Can associate with both E- and N-cadherins. Originally believed to be a stable component of E-cadherin/catenin adhesion complexes and to mediate the linkage of cadherins to the actin cytoskeleton at adherens junctions. In contrast, cortical actin was found to be much more dynamic than E-cadherin/catenin complexes and CTNNA1 was shown not to bind to F-actin when assembled in the complex suggesting a different linkage between actin and adherens junctions components. The homodimeric form may regulate actin filament assembly and inhibit actin branching by competing with the Arp2/3 complex for binding to actin filaments. Involved in the regulation of WWTR1/TAZ, YAP1 and TGFB1-dependent SMAD2 and SMAD3 nuclear accumulation. May play a crucial role in cell differentiation. This chain is Catenin alpha-1, found in Homo sapiens (Human).